Reading from the N-terminus, the 349-residue chain is Transcriptional repressor protein KorB (349 aa).

Disordered regions lie at residues 1–72 and 246–296; these read MSAK…SPES and RSHD…DKLK. Residues 25–40 are compositionally biased toward low complexity; sequence LGDLAGLLNEQPAANA. Basic and acidic residues-rich tracts occupy residues 246-256 and 279-296; these read RSHDDGDRDPN and DDAKGKKEPKEADPDKLK.

It belongs to the ParB family.

In conjunction with KorA, inhibits the transcription of the kilA, trfA and korAB operons. Is also involved in the negative control of the kilB operon. This chain is Transcriptional repressor protein KorB (korB), found in Escherichia coli.